The primary structure comprises 305 residues: Glycine--tRNA ligase alpha subunit (305 aa).

The protein belongs to the class-II aminoacyl-tRNA synthetase family. In terms of assembly, tetramer of two alpha and two beta subunits.

It is found in the cytoplasm. The enzyme catalyses tRNA(Gly) + glycine + ATP = glycyl-tRNA(Gly) + AMP + diphosphate. The chain is Glycine--tRNA ligase alpha subunit from Streptococcus pyogenes serotype M49 (strain NZ131).